The chain runs to 204 residues: Protease (204 aa).

Residues H54, D71, and C121 contribute to the active site.

It belongs to the peptidase C5 family. Interacts with protease cofactor pVI-C; this interaction is necessary for protease activation.

The protein resides in the virion. It localises to the host nucleus. The enzyme catalyses Cleaves proteins of the adenovirus and its host cell at two consensus sites: -Yaa-Xaa-Gly-Gly-|-Xaa- and -Yaa-Xaa-Gly-Xaa-|-Gly- (in which Yaa is Met, Ile or Leu, and Xaa is any amino acid).. With respect to regulation, requires DNA and protease cofactor for maximal activation. Inside nascent virions, becomes partially activated by binding to the viral DNA, allowing it to cleave the cofactor that binds to the protease and fully activates it. Actin, like the viral protease cofactor, seems to act as a cofactor in the cleavage of cytokeratin 18 and of actin itself. In terms of biological role, cleaves viral precursor proteins (pTP, pIIIa, pVI, pVII, pVIII, and pX) inside newly assembled particles giving rise to mature virions. Protease complexed to its cofactor slides along the viral DNA to specifically locate and cleave the viral precursors. Mature virions have a weakened organization compared to the unmature virions, thereby facilitating subsequent uncoating. Without maturation, the particle lacks infectivity and is unable to uncoat. Late in adenovirus infection, in the cytoplasm, may participate in the cytoskeleton destruction. Cleaves host cell cytoskeletal keratins K7 and K18. The sequence is that of Protease from Frog adenovirus 1 (strain ATCC VR-896) (FrAdV-1).